Consider the following 254-residue polypeptide: Transcription factor CAULIFLOWER (254 aa).

Residues 1-61 (MGRGRVEMKR…GKLFEYSSES (61 aa)) form the MADS-box domain. The region spanning 90 to 180 (QTNWSMEYSR…TKQIKERESI (91 aa)) is the K-box domain. Over residues 182–191 (RTHQNQSEQQ) the composition is skewed to polar residues. The disordered stretch occupies residues 182–205 (RTHQNQSEQQNRSHHVAPQPQPQL).

As to quaternary structure, homodimer capable of binding to CArG-box sequences.

The protein resides in the nucleus. In terms of biological role, probable transcription factor that promotes early floral meristem identity in synergy with APETALA1, FRUITFULL and LEAFY. Is required subsequently for the transition of an inflorescence meristem into a floral meristem. Seems to be partially redundant to the function of APETALA1. In Brassica rapa subsp. chinensis (Pak-choi), this protein is Transcription factor CAULIFLOWER (CAL).